Here is a 73-residue protein sequence, read N- to C-terminus: Protein SlyX homolog (73 aa).

The protein belongs to the SlyX family.

In Histophilus somni (strain 129Pt) (Haemophilus somnus), this protein is Protein SlyX homolog.